A 338-amino-acid chain; its full sequence is Selenocysteine methyltransferase (338 aa).

The region spanning 1–327 (MSSPLITDFL…DTIRGIYKIL (327 aa)) is the Hcy-binding domain. Residues Cys245, Cys312, and Cys313 each coordinate Zn(2+).

In terms of assembly, monomer. The cofactor is Zn(2+). As to expression, present in all tissues tested.

It carries out the reaction S-methyl-L-methionine + L-selenocysteine = Se-methyl-L-selenocysteine + L-methionine + H(+). In terms of biological role, catalyzes the methylation of selenocysteine with S-methylmethionine as donor. Does not methylate cysteine. This Astragalus bisulcatus (Two-grooved milkvetch) protein is Selenocysteine methyltransferase (SMTA).